Here is a 178-residue protein sequence, read N- to C-terminus: Translation initiation factor IF-3 (178 aa).

It belongs to the IF-3 family. In terms of assembly, monomer.

It localises to the cytoplasm. IF-3 binds to the 30S ribosomal subunit and shifts the equilibrium between 70S ribosomes and their 50S and 30S subunits in favor of the free subunits, thus enhancing the availability of 30S subunits on which protein synthesis initiation begins. This Picosynechococcus sp. (strain ATCC 27264 / PCC 7002 / PR-6) (Agmenellum quadruplicatum) protein is Translation initiation factor IF-3.